The primary structure comprises 121 residues: Small ribosomal subunit protein uS13 (121 aa).

The disordered stretch occupies residues 94-121 (GLPVRGQNTKNNARTRKGPRRTVANKKK). The span at 106 to 121 (ARTRKGPRRTVANKKK) shows a compositional bias: basic residues.

It belongs to the universal ribosomal protein uS13 family. Part of the 30S ribosomal subunit. Forms a loose heterodimer with protein S19. Forms two bridges to the 50S subunit in the 70S ribosome.

Located at the top of the head of the 30S subunit, it contacts several helices of the 16S rRNA. In the 70S ribosome it contacts the 23S rRNA (bridge B1a) and protein L5 of the 50S subunit (bridge B1b), connecting the 2 subunits; these bridges are implicated in subunit movement. Contacts the tRNAs in the A and P-sites. In Geobacillus kaustophilus (strain HTA426), this protein is Small ribosomal subunit protein uS13.